The primary structure comprises 530 residues: Probable basic-leucine zipper transcription factor L (530 aa).

Composition is skewed to low complexity over residues 1–17 (MYSPSSPQSSEPMSPES) and 24–39 (SINNSNSSNNSSANQS). Residues 1–76 (MYSPSSPQSS…QSAALSRSRK (76 aa)) are disordered. A bZIP domain is found at 55–118 (VKKRQVRLLK…FETKSRLEFL (64 aa)). Positions 56 to 77 (KKRQVRLLKNRQSAALSRSRKK) are basic motif. Residues 83–104 (LESKAQELTHSTQELHVQYNKI) are leucine-zipper. Disordered regions lie at residues 142-177 (NNIKSHSRSNSSSSSLSSSPTTPNTTTTTTTSTTPV), 216-258 (SQNK…SPTP), and 389-481 (HHHH…SQIN). Composition is skewed to low complexity over residues 149-176 (RSNSSSSSLSSSPTTPNTTTTTTTSTTP) and 220-247 (NNNNNNNNNNNNNNNNNNNNNNNNNTTN). Polar residues predominate over residues 248–257 (LLDQQQQSPT). Positions 436–478 (SSSPSSSSTSSPSTSSPSTPKSMGFPSPIFIGSSGSGPSSSGS) are enriched in low complexity.

Belongs to the bZIP family.

Its subcellular location is the nucleus. Its function is as follows. Probable transcriptional regulator. The polypeptide is Probable basic-leucine zipper transcription factor L (bzpL) (Dictyostelium discoideum (Social amoeba)).